The chain runs to 206 residues: Ribonuclease HII (206 aa).

One can recognise an RNase H type-2 domain in the interval 18–206 (GRVAGVDEVG…PVREWLEANS (189 aa)). A divalent metal cation is bound by residues D24, E25, and D116.

It belongs to the RNase HII family. Mn(2+) serves as cofactor. Mg(2+) is required as a cofactor.

The protein localises to the cytoplasm. The catalysed reaction is Endonucleolytic cleavage to 5'-phosphomonoester.. Its function is as follows. Endonuclease that specifically degrades the RNA of RNA-DNA hybrids. This is Ribonuclease HII from Shewanella amazonensis (strain ATCC BAA-1098 / SB2B).